The primary structure comprises 96 residues: MSRKRIRWTLRALRRLDEIGAYIEKDDPDAAARVVARIGTAVDALAEYPASGRPGRIKSTRELVLADIPYIIPYRISRDVEILTVMHAHQQWPQVL.

It belongs to the RelE toxin family.

Functionally, toxic component of a type II toxin-antitoxin (TA) system. In Sinorhizobium fredii (strain NBRC 101917 / NGR234), this protein is Putative toxin Y4kP.